We begin with the raw amino-acid sequence, 404 residues long: Cysteine desulfurase IscS (404 aa).

Pyridoxal 5'-phosphate contacts are provided by residues 75-76, asparagine 155, glutamine 183, and 203-205; these read AT and SAH. Lysine 206 is subject to N6-(pyridoxal phosphate)lysine. A pyridoxal 5'-phosphate-binding site is contributed by threonine 243. Residue cysteine 328 is the Cysteine persulfide intermediate of the active site. Residue cysteine 328 participates in [2Fe-2S] cluster binding.

The protein belongs to the class-V pyridoxal-phosphate-dependent aminotransferase family. NifS/IscS subfamily. As to quaternary structure, homodimer. Forms a heterotetramer with IscU, interacts with other sulfur acceptors. Pyridoxal 5'-phosphate serves as cofactor.

It localises to the cytoplasm. The enzyme catalyses (sulfur carrier)-H + L-cysteine = (sulfur carrier)-SH + L-alanine. It participates in cofactor biosynthesis; iron-sulfur cluster biosynthesis. Master enzyme that delivers sulfur to a number of partners involved in Fe-S cluster assembly, tRNA modification or cofactor biosynthesis. Catalyzes the removal of elemental sulfur atoms from cysteine to produce alanine. Functions as a sulfur delivery protein for Fe-S cluster synthesis onto IscU, an Fe-S scaffold assembly protein, as well as other S acceptor proteins. This Pseudomonas putida (strain ATCC 700007 / DSM 6899 / JCM 31910 / BCRC 17059 / LMG 24140 / F1) protein is Cysteine desulfurase IscS.